Consider the following 454-residue polypeptide: tRNA(Ile)-lysidine synthase (454 aa).

31-36 is an ATP binding site; sequence SGGADS.

Belongs to the tRNA(Ile)-lysidine synthase family.

Its subcellular location is the cytoplasm. It carries out the reaction cytidine(34) in tRNA(Ile2) + L-lysine + ATP = lysidine(34) in tRNA(Ile2) + AMP + diphosphate + H(+). Ligates lysine onto the cytidine present at position 34 of the AUA codon-specific tRNA(Ile) that contains the anticodon CAU, in an ATP-dependent manner. Cytidine is converted to lysidine, thus changing the amino acid specificity of the tRNA from methionine to isoleucine. The sequence is that of tRNA(Ile)-lysidine synthase from Porphyromonas gingivalis (strain ATCC BAA-308 / W83).